The following is a 137-amino-acid chain: Putative pre-16S rRNA nuclease (137 aa).

This sequence belongs to the YqgF nuclease family.

Its subcellular location is the cytoplasm. Its function is as follows. Could be a nuclease involved in processing of the 5'-end of pre-16S rRNA. This Buchnera aphidicola subsp. Schizaphis graminum (strain Sg) protein is Putative pre-16S rRNA nuclease.